Reading from the N-terminus, the 255-residue chain is 5'-nucleotidase SurE (255 aa).

A divalent metal cation contacts are provided by Asp-8, Asp-9, Ser-39, and Asn-95.

This sequence belongs to the SurE nucleotidase family. A divalent metal cation serves as cofactor.

It localises to the cytoplasm. It catalyses the reaction a ribonucleoside 5'-phosphate + H2O = a ribonucleoside + phosphate. Its function is as follows. Nucleotidase that shows phosphatase activity on nucleoside 5'-monophosphates. In Thermosipho melanesiensis (strain DSM 12029 / CIP 104789 / BI429), this protein is 5'-nucleotidase SurE.